The chain runs to 906 residues: Protein translocase subunit SecA (906 aa).

ATP contacts are provided by residues glutamine 89, 107 to 111, and aspartate 502; that span reads GEGKT. Residues 868-887 are disordered; that stretch reads VPPAQRDPADPRTWGKVSRN. Cysteine 890, cysteine 892, cysteine 901, and histidine 902 together coordinate Zn(2+).

Belongs to the SecA family. As to quaternary structure, monomer and homodimer. Part of the essential Sec protein translocation apparatus which comprises SecA, SecYEG and auxiliary proteins SecDF-YajC and YidC. Zn(2+) serves as cofactor.

The protein localises to the cell inner membrane. Its subcellular location is the cytoplasm. It carries out the reaction ATP + H2O + cellular proteinSide 1 = ADP + phosphate + cellular proteinSide 2.. Functionally, part of the Sec protein translocase complex. Interacts with the SecYEG preprotein conducting channel. Has a central role in coupling the hydrolysis of ATP to the transfer of proteins into and across the cell membrane, serving both as a receptor for the preprotein-SecB complex and as an ATP-driven molecular motor driving the stepwise translocation of polypeptide chains across the membrane. In Brucella abortus (strain S19), this protein is Protein translocase subunit SecA.